Reading from the N-terminus, the 355-residue chain is Chorismate synthase (355 aa).

NADP(+)-binding residues include R44 and R49. FMN-binding positions include H121–S123, G277, K292–S296, and R319.

Belongs to the chorismate synthase family. The cofactor is FMNH2.

It catalyses the reaction 5-O-(1-carboxyvinyl)-3-phosphoshikimate = chorismate + phosphate. The protein operates within metabolic intermediate biosynthesis; chorismate biosynthesis; chorismate from D-erythrose 4-phosphate and phosphoenolpyruvate: step 7/7. Functionally, catalyzes the anti-1,4-elimination of the C-3 phosphate and the C-6 proR hydrogen from 5-enolpyruvylshikimate-3-phosphate (EPSP) to yield chorismate, which is the branch point compound that serves as the starting substrate for the three terminal pathways of aromatic amino acid biosynthesis. This reaction introduces a second double bond into the aromatic ring system. The protein is Chorismate synthase of Thermococcus kodakarensis (strain ATCC BAA-918 / JCM 12380 / KOD1) (Pyrococcus kodakaraensis (strain KOD1)).